The primary structure comprises 1480 residues: Nonribosomal peptide synthetase-like enzyme fsqF (1480 aa).

A disordered region spans residues 31-59 (SPFADEPSIDVPSTHLPVVTPRSKTANDR). The segment at 132–527 (DSARATPHAP…VGRTDDQVKY (396 aa)) is adenylation domain. One can recognise a Carrier domain in the interval 662-741 (STARTIAREY…SIASLIDANS (80 aa)). S700 is subject to O-(pantetheine 4'-phosphoryl)serine. Polar residues predominate over residues 739–754 (ANSSPGRGQPLNTQET). Residues 739–773 (ANSSPGRGQPLNTQETARLPLRSNGPAPSQQALER) form a disordered region. An NAD-binding domain region spans residues 780 to 1003 (LTGASGFLGI…ACVELGFYNG (224 aa)). Residues 1100 to 1465 (NAAGTVVHRE…YNTVAEVQEF (366 aa)) form an aminotransferase domain region.

It belongs to the NRP synthetase family.

It participates in secondary metabolite biosynthesis. Nonribosomal peptide synthetase-like enzyme; part of the gene cluster that mediates the biosynthesis of the isoquinoline alkaloids fumisoquin A, fumisoquin B and fumisoquin C; as well as small amounts of fumipyrrole as a shunt metabolite. The products of the cluster lead to a brown coloration and are important for growth and conidiation. The nonribosomal peptide synthetase-like protein fsqF, which lacks a canonical condensation domain, is required for addition of a serine-derived dehydroalanine moiety to activated tyrosine but is not essential for the subsequent steps leading to isoquinoline formation. A different enzyme, most likely the ATP-grasp enzyme fsqD, is responsible for activation of tyrosine. Three additional enzymes encoded by the fsq cluster, the N-methyltransferase fsqC, the phenol 2-monooxygenase fsqG and the FAD-dependent oxidase fsqB, catalyze the formation of the isoquinoline ring system in the fumisoquins. FsqB converts the fspF thiolation domain-bound (2S,4S,5S)-2-amino-6-(3,4-dihydroxyphenyl)-4-hydroxy-5-(methylamino)hexanoyl into isoquinoline. The cyclization most likely proceeds via a two-step mechanism, beginning with FAD-dependent oxidation of the methyl group to an iminium species followed by electrophilic attack on the deprotonated phenol. This chain is Nonribosomal peptide synthetase-like enzyme fsqF, found in Aspergillus fumigatus (strain ATCC MYA-4609 / CBS 101355 / FGSC A1100 / Af293) (Neosartorya fumigata).